We begin with the raw amino-acid sequence, 181 residues long: Protein GrpE (181 aa).

A compositionally biased stretch (acidic residues) spans 1-24 (MSEENIGENEVETPETEPSAEAEV). A disordered region spans residues 1–26 (MSEENIGENEVETPETEPSAEAEVES).

The protein belongs to the GrpE family. As to quaternary structure, homodimer.

It is found in the cytoplasm. Participates actively in the response to hyperosmotic and heat shock by preventing the aggregation of stress-denatured proteins, in association with DnaK and GrpE. It is the nucleotide exchange factor for DnaK and may function as a thermosensor. Unfolded proteins bind initially to DnaJ; upon interaction with the DnaJ-bound protein, DnaK hydrolyzes its bound ATP, resulting in the formation of a stable complex. GrpE releases ADP from DnaK; ATP binding to DnaK triggers the release of the substrate protein, thus completing the reaction cycle. Several rounds of ATP-dependent interactions between DnaJ, DnaK and GrpE are required for fully efficient folding. In Rhizorhabdus wittichii (strain DSM 6014 / CCUG 31198 / JCM 15750 / NBRC 105917 / EY 4224 / RW1) (Sphingomonas wittichii), this protein is Protein GrpE.